Reading from the N-terminus, the 234-residue chain is tRNA (guanine-N(1)-)-methyltransferase (234 aa).

S-adenosyl-L-methionine contacts are provided by residues G112 and 132–137; that span reads IGDFIL.

It belongs to the RNA methyltransferase TrmD family. Homodimer.

The protein resides in the cytoplasm. The catalysed reaction is guanosine(37) in tRNA + S-adenosyl-L-methionine = N(1)-methylguanosine(37) in tRNA + S-adenosyl-L-homocysteine + H(+). In terms of biological role, specifically methylates guanosine-37 in various tRNAs. The polypeptide is tRNA (guanine-N(1)-)-methyltransferase (Campylobacter jejuni (strain RM1221)).